A 219-amino-acid chain; its full sequence is Tegument protein UL14 (219 aa).

The interval 161–219 (ANGPSRIGSHPTYTPTPTGPPGAPAAPLSRTPPSPAPPTGPATDPASASGFARDYPDGE) is disordered. Residues 177-200 (PTGPPGAPAAPLSRTPPSPAPPTG) show a composition bias toward pro residues.

It belongs to the alphaherpesvirinae HHV-1 UL14 protein family. Interacts with UL51. In terms of processing, phosphorylated.

The protein localises to the virion tegument. It is found in the host cytoplasm. The protein resides in the host nucleus. Contributes to the nuclear transport of the viral transcriptional activator VP16 during the early phase of infection. Therefore, participates indirectly in the regulation of the immediate-early gene expression. Additionally, seems to be important for efficient nuclear targeting of capsids. The UL51-UL14 complex regulates final viral envelopment for efficient viral replication. This Human herpesvirus 1 (strain 17) (HHV-1) protein is Tegument protein UL14.